Consider the following 322-residue polypeptide: Short chain dehydrogenase AOL_s00215g274 (322 aa).

NAD(+)-binding positions include 47–48 (AV), 104–106 (IAV), 197–201 (YNVSK), and 230–232 (VAT). The Proton acceptor role is filled by Tyr197.

The protein belongs to the short-chain dehydrogenases/reductases (SDR) family.

Its pathway is secondary metabolite biosynthesis; terpenoid biosynthesis. Functionally, short chain dehydrogenase; part of the gene cluster that mediates the biosynthesis of sesquiterpenyl epoxy-cyclohexenoids (SECs) such as anthrobotrisins and arthrosporols, metabolites that possess a novel hybrid carbon skeleton consisting of a polyketide-derived epoxycyclohexenol combined with a terpenoid-derived monocyclic sesquiterpenol substructure (PKS-PTS hybrid). The SEC pathway plays an important role for fungal soil colonization via decreasing fungal nematode-capturing ability. Within the pathway, the cytochrome P450 monooxygenase AOL_s00215g274 is involved in specific regional ketone reductions at C-4 of farnesyl epoxy-quinone. The pathway begins with the biosynthesis of 6-methylsalicylic acid (6-MSA), the first precursor of the polyketide-derived epoxycyclohexenol in arthrosporols, by the polyketide synthase (PKS) AOL_s00215g283 via condensation of 1 acetate and 3 malonate units. The 6-methylsalicylic acid decarboxylase AOL_s00215g281 then catalyzes the decarboxylation of 6-methylsalicylic acid to yield m-cresol. The cytochrome P450 monooxygenase AOL_s00215g282 further oxidizes m-cresol to yield toluquinol. With the assistance of the oxidoreductase AOL_s00215g277, the polyprenyl transferase AOL_s00215g276 catalyzes the farnesylation of toluquinol to produce farnesyl hydroquinone, the hybrid precursor for biosynthesis of SECs. Farnesyl hydroquinone undergoes epoxidation and then subsequent dehydrogenation to form farnesyl epoxy-quinone, the first and simplest SEC. The cytochrome P450 monooxygenase AOL_s00215g278 and the FAD-dependent monooxygenase AOL_s00215g279 might be involved in the oxygenation of the phenol moiety, most likely in the epoxy formation. The cytochrome P450 monooxygenases AOL_s00215g274 and AOL_s00215g280 are involved in specific regional ketone reductions at respectively C-4 and C-1 of farnesyl epoxy-quinone PubMed:33823587. This chain is Short chain dehydrogenase AOL_s00215g274, found in Arthrobotrys oligospora (strain ATCC 24927 / CBS 115.81 / DSM 1491) (Nematode-trapping fungus).